A 1247-amino-acid chain; its full sequence is Structural polyprotein (1247 aa).

The interval 36–67 is host transcription inhibition; sequence RPAGQLAQLISAVSRLALRTVPQKPRRTRKIK. Residues 54 to 103 form a disordered region; the sequence is RTVPQKPRRTRKIKKQKQVKQEQQSTTNQKKKAPKQKQTQKKKRPGRRER. 2 stretches are compositionally biased toward basic residues: residues 59-71 and 82-100; these read KPRRTRKIKKQKQ and QKKKAPKQKQTQKKKRPGR. The Nuclear localization signal signature appears at 60 to 98; it reads PRRTRKIKKQKQVKQEQQSTTNQKKKAPKQKQTQKKKRP. The interval 83 to 113 is binding to the viral RNA; it reads KKKAPKQKQTQKKKRPGRRERMCMKIENDCI. A ribosome-binding region spans residues 98-112; it reads PGRRERMCMKIENDC. An intrachain disulfide couples Cys-112 to Cys-127. The Peptidase S3 domain occupies 112 to 260; the sequence is CIFEVRHEGK…KITPEGSVEW (149 aa). Residue His-138 is the Charge relay system of the active site. The short motif at 143–153 is the Nuclear export signal element; that stretch reads IDNADLAKLAF. The segment at 154-159 is interaction with spike glycoprotein E2; it reads KRSSKY. Asp-160 (charge relay system) is an active-site residue. The interval 182-192 is dimerization of the capsid protein; it reads PEGYYNWHHGA. Catalysis depends on Ser-212, which acts as the Charge relay system. The tract at residues 218 to 222 is dimerization of the capsid protein; the sequence is DNKGR. Residues 261–273 are functions as an uncleaved signal peptide for the precursor of protein E3/E2; it reads SLALPVMCLLANT. 9 disulfide bridges follow: Cys-268-Cys-277, Cys-282-Cys-286, Cys-285-Cys-317, Cys-343-Cys-449, Cys-346-Cys-352, Cys-415-Cys-429, Cys-477-Cys-590, Cys-525-Cys-549, and Cys-527-Cys-544. N-linked (GlcNAc...) asparagine; by host glycosylation is present at Asn-272. 2 N-linked (GlcNAc...) asparagine; by host glycosylation sites follow: Asn-587 and Asn-669. The chain crosses the membrane as a helical span at residues 692 to 712; that stretch reads IAVLAAASIVITSLVGLSLGM. The interaction with the capsid protein stretch occupies residues 715–719; the sequence is CARRR. 3 S-palmitoyl cysteine; by host lipidation sites follow: Cys-720, Cys-740, and Cys-741. Residues 720-740 form a helical membrane-spanning segment; sequence CITPYELTPGATIPFLLGVLC. A transient transmembrane before p62-6K protein processing region spans residues 720 to 740; that stretch reads CITPYELTPGATIPFLLGVLC. Cys-720 and Cys-741 are oxidised to a cystine. A helical transmembrane segment spans residues 763-783; the sequence is PLFWLQLLIPLSAAIVVCNCL. 4 disulfides stabilise this stretch: Cys-857–Cys-922, Cys-870–Cys-902, Cys-871–Cys-904, and Cys-876–Cys-886. The interval 892–909 is E1 fusion peptide loop; the sequence is VYPFMWGGAYCFCDAENT. Asn-949 and Asn-1078 each carry an N-linked (GlcNAc...) asparagine; by host glycan. Disulfide bonds link Cys-1067–Cys-1079, Cys-1109–Cys-1184, Cys-1114–Cys-1188, and Cys-1136–Cys-1178. The helical transmembrane segment at 1224–1244 threads the bilayer; it reads GVGLVVAIAALILIIVLCVSF. A lipid anchor (S-palmitoyl cysteine; by host) is attached at Cys-1241. Cys-1241 carries the S-stearoyl cysteine; by host lipid modification.

Homodimer. Homomultimer. Interacts with host karyopherin KPNA4; this interaction allows the nuclear import of the viral capsid protein. Interacts with spike glycoprotein E2. Interacts with host IRAK1; the interaction leads to inhibition of IRAK1-dependent signaling. In terms of assembly, the precursor of protein E3/E2 and E1 form a heterodimer shortly after synthesis. As to quaternary structure, the precursor of protein E3/E2 and E1 form a heterodimer shortly after synthesis. Processing of the precursor of protein E3/E2 into E2 and E3 results in a heterodimer of the spike glycoproteins E2 and E1. Spike at virion surface are constituted of three E2-E1 heterodimers. After target cell attachment and endocytosis, E1 change conformation to form homotrimers. Interacts with 6K protein. Interacts with spike glycoprotein E1. Processing of the precursor of protein E3/E2 into E2 and E3 results in a heterodimer of the spike glycoproteins E2 and E1. Spike at virion surface are constituted of a trimer of E2-E1 heterodimers. Interacts with 6K protein. Interacts with host MXRA8; this interaction mediates virus entry. In terms of assembly, oligomer. Interacts with spike glycoprotein E1. Interacts with spike glycoprotein E2. Post-translationally, structural polyprotein: Specific enzymatic cleavages in vivo yield mature proteins. Capsid protein is auto-cleaved during polyprotein translation, unmasking a signal peptide at the N-terminus of the precursor of E3/E2. The remaining polyprotein is then targeted to the host endoplasmic reticulum, where host signal peptidase cleaves it into pE2, 6K and E1 proteins. pE2 is further processed to mature E3 and E2 by host furin in trans-Golgi vesicle. Palmitoylated via thioester bonds. These palmitoylations may induce disruption of the C-terminus transmembrane. This would result in the reorientation of E2 C-terminus from lumenal to cytoplasmic side. In terms of processing, N-glycosylated. Post-translationally, palmitoylated via thioester bonds.

The protein resides in the virion. It is found in the host cytoplasm. It localises to the host cell membrane. Its subcellular location is the host nucleus. The protein localises to the virion membrane. The protein resides in the host Golgi apparatus. It is found in the host trans-Golgi network. It localises to the host endoplasmic reticulum. It carries out the reaction Autocatalytic release of the core protein from the N-terminus of the togavirus structural polyprotein by hydrolysis of a -Trp-|-Ser- bond.. In terms of biological role, forms an icosahedral capsid with a T=4 symmetry composed of 240 copies of the capsid protein surrounded by a lipid membrane through which penetrate 80 spikes composed of trimers of E1-E2 heterodimers. The capsid protein binds to the viral RNA genome at a site adjacent to a ribosome binding site for viral genome translation following genome release. Possesses a protease activity that results in its autocatalytic cleavage from the nascent structural protein. Following its self-cleavage, the capsid protein transiently associates with ribosomes, and within several minutes the protein binds to viral RNA and rapidly assembles into icosahedric core particles. The resulting nucleocapsid eventually associates with the cytoplasmic domain of the spike glycoprotein E2 at the cell membrane, leading to budding and formation of mature virions. In case of infection, new virions attach to target cells and after clathrin-mediated endocytosis their membrane fuses with the host endosomal membrane. This leads to the release of the nucleocapsid into the cytoplasm, followed by an uncoating event necessary for the genomic RNA to become accessible. The uncoating might be triggered by the interaction of capsid proteins with ribosomes. Binding of ribosomes would release the genomic RNA since the same region is genomic RNA-binding and ribosome-binding. Specifically inhibits interleukin-1 receptor-associated kinase 1/IRAK1-dependent signaling during viral entry, representing a means by which the alphaviruses may evade innate immune detection and activation prior to viral gene expression. Provides the signal sequence for the translocation of the precursor of protein E3/E2 to the host endoplasmic reticulum. Furin-cleaved E3 remains associated with spike glycoprotein E1 and mediates pH protection of the latter during the transport via the secretory pathway. After virion release from the host cell, the assembly protein E3 is gradually released in the extracellular space. Functionally, plays a role in viral attachment to target host cell, by binding to the cell receptor MXRA8. Synthesized as a p62 precursor which is processed by furin at the cell membrane just before virion budding, giving rise to E2-E1 heterodimer. The p62-E1 heterodimer is stable, whereas E2-E1 is unstable and dissociate at low pH. p62 is processed at the last step, presumably to avoid E1 fusion activation before its final export to cell surface. E2 C-terminus contains a transitory transmembrane that would be disrupted by palmitoylation, resulting in reorientation of the C-terminal tail from lumenal to cytoplasmic side. This step is critical since E2 C-terminus is involved in budding by interacting with capsid proteins. This release of E2 C-terminus in cytoplasm occurs lately in protein export, and precludes premature assembly of particles at the endoplasmic reticulum membrane. Its function is as follows. Acts as a viroporin that participates in virus glycoprotein processing and transport to the plasma membrane, cell permeabilization and budding of viral particles. Disrupts the calcium homeostasis of the cell, probably at the endoplasmic reticulum level. This leads to cytoplasmic calcium elevation. Because of its lipophilic properties, the 6K protein is postulated to influence the selection of lipids that interact with the transmembrane domains of the glycoproteins, which, in turn, affects the deformability of the bilayer required for the extreme curvature that occurs as budding proceeds. Present in low amount in virions, about 3% compared to viral glycoproteins. In terms of biological role, class II viral fusion protein. Fusion activity is inactive as long as E1 is bound to E2 in mature virion. After virus attachment to target cell via host MXRA8 and endocytosis, acidification of the endosome induce dissociation of E1/E2 heterodimer and concomitant trimerization of the E1 subunits. This E1 trimer is fusion active, and promotes release of viral nucleocapsid in cytoplasm after endosome and viral membrane fusion. Efficient fusion requires the presence of cholesterol and sphingolipid in the target membrane. In O'nyong-nyong virus (strain Gulu) (ONNV), this protein is Structural polyprotein.